The following is a 425-amino-acid chain: Sodium-dependent glucose transporter 1A (425 aa).

The next 11 membrane-spanning stretches (helical) occupy residues 35-55 (LIFVGRATGFLSGTMIGGVLF), 61-81 (FFLLGASMVATAAGLYLIPFC), 84-104 (AVLLIITMSVFGASVGVVDTG), 123-143 (ALHFSFALGAFLAPLLAKLAW), 183-203 (WAYASIGTFILVVSVFLFGLF), 228-248 (ALLCLLFLFFFFYVGAEITYG), 271-291 (SIFWGTFAACRGLAIFFATFL), 294-314 (GTMIVLSNIGSLVSCFFLVLF), 320-340 (CLWIATSVYGASMAATFPSGI), 355-375 (AFFVIGSALGDMAIPAVIGIL), and 382-402 (LPVVLYTCLGSAIFTAILFPV).

The protein belongs to the major facilitator superfamily.

The protein localises to the apical cell membrane. May function as a sodium-dependent glucose transporter. Potential channels for urea in the inner medulla of kidney. This is Sodium-dependent glucose transporter 1A from Mus musculus (Mouse).